Consider the following 255-residue polypeptide: Acetylglutamate kinase (255 aa).

Residues 40–41 (GG), Arg-62, and Asn-153 contribute to the substrate site.

This sequence belongs to the acetylglutamate kinase family. ArgB subfamily.

The protein resides in the cytoplasm. It catalyses the reaction N-acetyl-L-glutamate + ATP = N-acetyl-L-glutamyl 5-phosphate + ADP. Its pathway is amino-acid biosynthesis; L-arginine biosynthesis; N(2)-acetyl-L-ornithine from L-glutamate: step 2/4. Its function is as follows. Catalyzes the ATP-dependent phosphorylation of N-acetyl-L-glutamate. The polypeptide is Acetylglutamate kinase (Bacillus cereus (strain ATCC 10987 / NRS 248)).